A 111-amino-acid chain; its full sequence is Cytochrome c (111 aa).

Ala1 is modified (N-acetylalanine). Positions 22, 25, and 26 each coordinate heme c. Lys80 carries the post-translational modification N6,N6,N6-trimethyllysine. Heme c is bound at residue Met88. At Lys94 the chain carries N6,N6,N6-trimethyllysine.

The protein belongs to the cytochrome c family. Post-translationally, binds 1 heme c group covalently per subunit.

Its subcellular location is the mitochondrion intermembrane space. Electron carrier protein. The oxidized form of the cytochrome c heme group can accept an electron from the heme group of the cytochrome c1 subunit of cytochrome reductase. Cytochrome c then transfers this electron to the cytochrome oxidase complex, the final protein carrier in the mitochondrial electron-transport chain. The polypeptide is Cytochrome c (Sesamum indicum (Oriental sesame)).